A 126-amino-acid chain; its full sequence is Protein LLP homolog (126 aa).

Residues 1–21 (MAKSLRSKWRRKMRAEKRKKV) are compositionally biased toward basic residues. Disordered regions lie at residues 1–22 (MAKS…KKVA) and 53–126 (VPPE…RLAW). Basic and acidic residues predominate over residues 73-94 (DGGKMDLDTKRNKKTMLDEHGR). The segment covering 103 to 126 (QAKKLKAKRVGKNGKPKPKKRLAW) has biased composition (basic residues).

This sequence belongs to the learning-associated protein family.

It is found in the nucleus. The protein resides in the nucleolus. It localises to the chromosome. Regulates dendritic and spine growth and synaptic transmission. This is Protein LLP homolog (llph) from Danio rerio (Zebrafish).